Reading from the N-terminus, the 426-residue chain is Transcriptional enhancer factor TEF-1 (426 aa).

Met1 carries the N-acetylmethionine modification. Positions 1–12 are enriched in polar residues; sequence MEPSSWSGSESP. The segment at 1-31 is disordered; sequence MEPSSWSGSESPAENMERMSDSADKPIDNDA. Residue Ser11 is modified to Phosphoserine. Basic and acidic residues predominate over residues 15 to 28; sequence NMERMSDSADKPID. The TEA DNA-binding region spans 28-104; it reads DNDAEGVWSP…QVLARRKSRD (77 aa). N6-lactoyllysine is present on Lys108. Residues 167 to 426 form a transcriptional activation region; sequence GSSQDVKPFV…QHHIYRLVKD (260 aa).

Interacts with YAP1 and WWTR1/TAZ. In terms of processing, lactylation by AARS1 promotes nuclear localization and stabilization of YAP1, leading to increased Hippo signaling pathway. Delactylated by SIRT1. In developing skeletal muscle and myocardium, in mitotic neuroblasts both in the brain and spinal cord. At later stages of embryogenesis expressed in several developing structures such as the olfactory system, the intestine, and the kidney.

It is found in the nucleus. Functionally, transcription factor which plays a key role in the Hippo signaling pathway, a pathway involved in organ size control and tumor suppression by restricting proliferation and promoting apoptosis. The core of this pathway is composed of a kinase cascade wherein MST1/MST2, in complex with its regulatory protein SAV1, phosphorylates and activates LATS1/2 in complex with its regulatory protein MOB1, which in turn phosphorylates and inactivates YAP1 oncoprotein and WWTR1/TAZ. Acts by mediating gene expression of YAP1 and WWTR1/TAZ, thereby regulating cell proliferation, migration and epithelial mesenchymal transition (EMT) induction. Binds specifically and cooperatively to the SPH and GT-IIC 'enhansons' (5'-GTGGAATGT-3') and activates transcription in vivo in a cell-specific manner. The activation function appears to be mediated by a limiting cell-specific transcriptional intermediary factor (TIF). Involved in cardiac development. Binds to the M-CAT motif. The chain is Transcriptional enhancer factor TEF-1 (Tead1) from Mus musculus (Mouse).